The sequence spans 160 residues: Heat shock protein beta-6 (160 aa).

Residues 1–72 (MEIPVPVQPS…PVAQVPTDPG (72 aa)) are involved in stabilization of the HSPB1:HSBP6 heterodimer. A Phosphoserine; by PKA modification is found at S16. Positions 55–160 (LRAPSVALPV…AQAPPPAAAK (106 aa)) constitute a sHSP domain. Q66 bears the Deamidated glutamine mark.

This sequence belongs to the small heat shock protein (HSP20) family. In terms of assembly, homodimer. Small heat shock proteins form high molecular mass oligomers containing variable number of monomers; these oligomers display a very flexible quaternary structure easily exchanging their subunits. Heterooligomer with HSPB1; formed through oligomerization of HSPB1:HSBP6 dimers; subunit exchange leads to formation of at least two different heterooligomeric complexes, differing in variable quantities of HSPB1 and HSPB6 homodimers in addition to HSPB1:HSPB6 heterodimers. Heterooligomer with CRYAB; large heterooligomers consist of CRYAB homodimers and HSPB5:HSPB6 heterodimers but lacking HSPB6 homodimers. Interacts with BAG3. Interacts (phosphorylated) with YWHAZ. Interacts with PDE4A and PDE4D; required for maintenance of the non-phosphorylated state of HSPB6 under basal conditions. Interacts with KDR. Interacts with PRKD1. Post-translationally, the N-terminus is blocked. Phosphorylated at Ser-16 by PKA and probably PKD1K; required to protect cardiomyocytes from apoptosis.

The protein resides in the cytoplasm. The protein localises to the nucleus. It localises to the secreted. Its function is as follows. Small heat shock protein which functions as a molecular chaperone probably maintaining denatured proteins in a folding-competent state. Seems to have versatile functions in various biological processes. Plays a role in regulating muscle function such as smooth muscle vasorelaxation and cardiac myocyte contractility. May regulate myocardial angiogenesis implicating KDR. Overexpression mediates cardioprotection and angiogenesis after induced damage. Stabilizes monomeric YWHAZ thereby supporting YWHAZ chaperone-like activity. The polypeptide is Heat shock protein beta-6 (HSPB6) (Homo sapiens (Human)).